We begin with the raw amino-acid sequence, 192 residues long: Fe/S biogenesis protein NfuA (192 aa).

Positions 149 and 152 each coordinate [4Fe-4S] cluster.

This sequence belongs to the NfuA family. Homodimer. The cofactor is [4Fe-4S] cluster.

Involved in iron-sulfur cluster biogenesis. Binds a 4Fe-4S cluster, can transfer this cluster to apoproteins, and thereby intervenes in the maturation of Fe/S proteins. Could also act as a scaffold/chaperone for damaged Fe/S proteins. The polypeptide is Fe/S biogenesis protein NfuA (Shewanella pealeana (strain ATCC 700345 / ANG-SQ1)).